The chain runs to 840 residues: N-acetyltransferase ESCO1 (840 aa).

Over residues 1-25 the composition is skewed to basic and acidic residues; that stretch reads MMSIQEKSKENSSKVTKKSDDKNSE. Residues 1–188 are disordered; the sequence is MMSIQEKSKE…VLEVKSDSKE (188 aa). 3 stretches are compositionally biased toward polar residues: residues 46 to 58, 65 to 74, and 81 to 96; these read KSQAKSSSESKIN, RMSTRSSKAA, and KSINKNTVTVRGYSQE. Positions 131 to 140 are enriched in basic and acidic residues; the sequence is VSRRSLRSRE. Residues 141–153 show a composition bias toward polar residues; sequence IQGQVQAVKQSLP. The segment covering 161-170 has biased composition (low complexity); it reads SSTQSKSNKT. A compositionally biased stretch (basic and acidic residues) spans 178 to 188; the sequence is KVLEVKSDSKE. Serine 200 is subject to Phosphoserine. Disordered stretches follow at residues 221 to 300 and 318 to 338; these read TQGS…KSKR and NVEVKKESSQMESVKEEKPTE. Residues 267–278 show a composition bias toward polar residues; sequence HTQVNTNTTLPK. Residues 319–338 show a composition bias toward basic and acidic residues; sequence VEVKKESSQMESVKEEKPTE. Lysine 332 is covalently cross-linked (Glycyl lysine isopeptide (Lys-Gly) (interchain with G-Cter in SUMO2)). Serine 412 bears the Phosphoserine mark. Disordered stretches follow at residues 486 to 505 and 542 to 582; these read ANEIKPSDPPLDNQMKHSFD and TGEN…KCNS. Residues 551 to 565 are compositionally biased toward polar residues; sequence APQQHSILSNQTSKS. Residues 617-641 form a CCHH-type zinc finger; sequence VSCNVCGMLYTASNPEDETQHLLFH. Acetyl-CoA contacts are provided by residues 772–774, 780–785, and 812–814; these read IWV, RKKIAS, and TPD.

Belongs to the acetyltransferase family. ECO subfamily. As to quaternary structure, the subunit structure is controversial. Monomer. Homodimer. Post-translationally, phosphorylated during mitosis, when associated with chromosomes. As to expression, widely expressed. Expressed in heart, brain, liver, placenta, lung, kidney and pancreas. Highly expressed in muscle.

The protein localises to the nucleus. It is found in the chromosome. It carries out the reaction L-lysyl-[protein] + acetyl-CoA = N(6)-acetyl-L-lysyl-[protein] + CoA + H(+). In terms of biological role, acetyltransferase required for the establishment of sister chromatid cohesion. Couples the processes of cohesion and DNA replication to ensure that only sister chromatids become paired together. In contrast to the structural cohesins, the deposition and establishment factors are required only during S phase. Acts by mediating the acetylation of cohesin component SMC3. The sequence is that of N-acetyltransferase ESCO1 (ESCO1) from Homo sapiens (Human).